Reading from the N-terminus, the 263-residue chain is 3-methyl-2-oxobutanoate hydroxymethyltransferase (263 aa).

The Mg(2+) site is built by Asp44 and Asp83. Residues 44–45 (DS), Asp83, and Lys112 each bind 3-methyl-2-oxobutanoate. Glu114 contributes to the Mg(2+) binding site. The active-site Proton acceptor is Glu181.

Belongs to the PanB family. Homodecamer; pentamer of dimers. The cofactor is Mg(2+).

The protein localises to the cytoplasm. The catalysed reaction is 3-methyl-2-oxobutanoate + (6R)-5,10-methylene-5,6,7,8-tetrahydrofolate + H2O = 2-dehydropantoate + (6S)-5,6,7,8-tetrahydrofolate. Its pathway is cofactor biosynthesis; (R)-pantothenate biosynthesis; (R)-pantoate from 3-methyl-2-oxobutanoate: step 1/2. Functionally, catalyzes the reversible reaction in which hydroxymethyl group from 5,10-methylenetetrahydrofolate is transferred onto alpha-ketoisovalerate to form ketopantoate. The chain is 3-methyl-2-oxobutanoate hydroxymethyltransferase from Sulfurimonas denitrificans (strain ATCC 33889 / DSM 1251) (Thiomicrospira denitrificans (strain ATCC 33889 / DSM 1251)).